The sequence spans 160 residues: S-ribosylhomocysteine lyase (160 aa).

Fe cation is bound by residues histidine 57, histidine 61, and cysteine 127.

It belongs to the LuxS family. In terms of assembly, homodimer. Fe cation is required as a cofactor.

The enzyme catalyses S-(5-deoxy-D-ribos-5-yl)-L-homocysteine = (S)-4,5-dihydroxypentane-2,3-dione + L-homocysteine. Functionally, involved in the synthesis of autoinducer 2 (AI-2) which is secreted by bacteria and is used to communicate both the cell density and the metabolic potential of the environment. The regulation of gene expression in response to changes in cell density is called quorum sensing. Catalyzes the transformation of S-ribosylhomocysteine (RHC) to homocysteine (HC) and 4,5-dihydroxy-2,3-pentadione (DPD). The polypeptide is S-ribosylhomocysteine lyase (Streptococcus thermophilus (strain CNRZ 1066)).